The primary structure comprises 690 residues: Adhesion G protein-coupled receptor L4 (690 aa).

A signal peptide spans 1–19 (MKRLPLLVVFSTLLNCSYT). Positions 20-57 (QNCTKTPCLPNAKCEIRNGIEACYCNMGFSGNGVTICE) constitute an EGF-like 1 domain. The Extracellular portion of the chain corresponds to 20-432 (QNCTKTPCLP…DYNILTRITQ (413 aa)). Residue Asn21 is glycosylated (N-linked (GlcNAc...) asparagine). 6 disulfide bridges follow: Cys22-Cys33, Cys27-Cys42, Cys44-Cys56, Cys62-Cys75, Cys69-Cys84, and Cys86-Cys107. The EGF-like 2; calcium-binding domain maps to 58–108 (DDNECGNLTQSCGENANCTNTEGSYYCMCVPGFRSSSNQDRFITNDGTVCI). N-linked (GlcNAc...) asparagine glycosylation is found at Asn64 and Asn74. N-linked (GlcNAc...) asparagine glycans are attached at residues Asn127, Asn177, Asn188, Asn249, Asn381, and Asn395. Residues 244-419 (TEFDTNSTDI…AILMSSGPSI (176 aa)) enclose the GAIN-B domain. 2 disulfide bridges follow: Cys370-Cys401 and Cys389-Cys403. The GPS stretch occupies residues 370 to 419 (CAFWNYSPDTMNGSWSSEGCELTYSNETHTSCRCNHLTHFAILMSSGPSI). Residues 433–453 (LGIIISLICLAICIFTFWFFS) form a helical membrane-spanning segment. Topologically, residues 454 to 460 (EIQSTRT) are cytoplasmic. Residues 461–481 (TIHKNLCCSLFLAELVFLVGI) traverse the membrane as a helical segment. The Extracellular segment spans residues 482 to 499 (NTNTNKLFCSIIAGLLHY). A helical membrane pass occupies residues 500–520 (FFLAAFAWMCIEGIHLYLIVV). The Cytoplasmic segment spans residues 521 to 532 (GVIYNKGFLHKN). Residues 533–553 (FYIFGYLSPAVVVGFSAALGY) traverse the membrane as a helical segment. At 554–573 (RYYGTTKVCWLSTENNFIWS) the chain is on the extracellular side. The helical transmembrane segment at 574-594 (FIGPACLIILVNLLAFGVIIY) threads the bilayer. The Cytoplasmic segment spans residues 595 to 618 (KVFRHTAGLKPEVSCFENIRSCAR). The helical transmembrane segment at 619–639 (GALALLFLLGTTWIFGVLHVV) threads the bilayer. Residues 640-646 (HASVVTA) are Extracellular-facing. A helical membrane pass occupies residues 647-667 (YLFTVSNAFQGMFIFLFLCVL). Residues 668-690 (SRKIQEEYYRLFKNVPCCFGCLR) lie on the Cytoplasmic side of the membrane.

The protein belongs to the G-protein coupled receptor 2 family. Adhesion G-protein coupled receptor (ADGR) subfamily. In terms of assembly, heterodimer of 2 chains generated by proteolytic processing; the large extracellular N-terminal fragment and the membrane-bound C-terminal fragment predominantly remain associated and non-covalently linked. Post-translationally, glycosylated. In terms of processing, proteolytically cleaved into 2 subunits, an extracellular alpha subunit and a seven-transmembrane subunit. Detected in the majority of epithelial cells in tumor and normal tissues. Expressed also in human umbilical vein endothelial cells.

It localises to the cell membrane. Endothelial orphan receptor that acts as a key regulator of angiogenesis. The chain is Adhesion G protein-coupled receptor L4 from Homo sapiens (Human).